Consider the following 869-residue polypeptide: Leucine--tRNA ligase (869 aa).

The short motif at 42–52 (PYPSGRLHMGH) is the 'HIGH' region element. Residues 620–624 (KMSKS) carry the 'KMSKS' region motif. Lys623 is a binding site for ATP.

It belongs to the class-I aminoacyl-tRNA synthetase family.

It localises to the cytoplasm. The catalysed reaction is tRNA(Leu) + L-leucine + ATP = L-leucyl-tRNA(Leu) + AMP + diphosphate. The polypeptide is Leucine--tRNA ligase (Hamiltonella defensa subsp. Acyrthosiphon pisum (strain 5AT)).